We begin with the raw amino-acid sequence, 143 residues long: Flagellar assembly factor FliW (143 aa).

Belongs to the FliW family. Interacts with translational regulator CsrA and flagellin(s).

The protein localises to the cytoplasm. Its function is as follows. Acts as an anti-CsrA protein, binds CsrA and prevents it from repressing translation of its target genes, one of which is flagellin. Binds to flagellin and participates in the assembly of the flagellum. This chain is Flagellar assembly factor FliW, found in Clostridium novyi (strain NT).